A 161-amino-acid polypeptide reads, in one-letter code: Phosphopantetheine adenylyltransferase (161 aa).

Ser11 is a binding site for substrate. ATP contacts are provided by residues Ser11 to Phe12 and His19. Substrate-binding residues include Lys43, Leu75, and Arg89. ATP-binding positions include Gly90–Arg92, Glu100, and Tyr125–Ser131.

The protein belongs to the bacterial CoaD family. In terms of assembly, homohexamer. Mg(2+) is required as a cofactor.

The protein resides in the cytoplasm. The enzyme catalyses (R)-4'-phosphopantetheine + ATP + H(+) = 3'-dephospho-CoA + diphosphate. It participates in cofactor biosynthesis; coenzyme A biosynthesis; CoA from (R)-pantothenate: step 4/5. In terms of biological role, reversibly transfers an adenylyl group from ATP to 4'-phosphopantetheine, yielding dephospho-CoA (dPCoA) and pyrophosphate. In Citrifermentans bemidjiense (strain ATCC BAA-1014 / DSM 16622 / JCM 12645 / Bem) (Geobacter bemidjiensis), this protein is Phosphopantetheine adenylyltransferase.